Here is a 73-residue protein sequence, read N- to C-terminus: ATP synthase subunit 9, mitochondrial (73 aa).

2 helical membrane-spanning segments follow: residues 12 to 32 (VAALGLIGAGIGVGIVFAALI) and 50 to 70 (ILGFALSEATGLFALMVSFLL).

This sequence belongs to the ATPase C chain family. F-type ATPases have 2 components, CF(1) - the catalytic core - and CF(0) - the membrane proton channel. CF(1) has five subunits: alpha(3), beta(3), gamma(1), delta(1), epsilon(1). CF(0) has three main subunits: a, b and c.

Its subcellular location is the mitochondrion inner membrane. Mitochondrial membrane ATP synthase (F(1)F(0) ATP synthase or Complex V) produces ATP from ADP in the presence of a proton gradient across the membrane which is generated by electron transport complexes of the respiratory chain. F-type ATPases consist of two structural domains, F(1) - containing the extramembraneous catalytic core and F(0) - containing the membrane proton channel, linked together by a central stalk and a peripheral stalk. During catalysis, ATP synthesis in the catalytic domain of F(1) is coupled via a rotary mechanism of the central stalk subunits to proton translocation. Part of the complex F(0) domain. A homomeric c-ring of probably 10 subunits is part of the complex rotary element. This Mycosarcoma maydis (Corn smut fungus) protein is ATP synthase subunit 9, mitochondrial (ATP9).